The primary structure comprises 158 residues: Regulator of sigma D (158 aa).

Belongs to the Rsd/AlgQ family. In terms of assembly, interacts with RpoD.

The protein localises to the cytoplasm. In terms of biological role, binds RpoD and negatively regulates RpoD-mediated transcription activation by preventing the interaction between the primary sigma factor RpoD with the catalytic core of the RNA polymerase and with promoter DNA. May be involved in replacement of the RNA polymerase sigma subunit from RpoD to RpoS during the transition from exponential growth to the stationary phase. This is Regulator of sigma D from Shigella boydii serotype 4 (strain Sb227).